The primary structure comprises 108 residues: Pyrimidine/purine nucleoside phosphorylase (108 aa).

It belongs to the nucleoside phosphorylase PpnP family.

The catalysed reaction is a purine D-ribonucleoside + phosphate = a purine nucleobase + alpha-D-ribose 1-phosphate. It catalyses the reaction adenosine + phosphate = alpha-D-ribose 1-phosphate + adenine. The enzyme catalyses cytidine + phosphate = cytosine + alpha-D-ribose 1-phosphate. It carries out the reaction guanosine + phosphate = alpha-D-ribose 1-phosphate + guanine. The catalysed reaction is inosine + phosphate = alpha-D-ribose 1-phosphate + hypoxanthine. It catalyses the reaction thymidine + phosphate = 2-deoxy-alpha-D-ribose 1-phosphate + thymine. The enzyme catalyses uridine + phosphate = alpha-D-ribose 1-phosphate + uracil. It carries out the reaction xanthosine + phosphate = alpha-D-ribose 1-phosphate + xanthine. In terms of biological role, catalyzes the phosphorolysis of diverse nucleosides, yielding D-ribose 1-phosphate and the respective free bases. Can use uridine, adenosine, guanosine, cytidine, thymidine, inosine and xanthosine as substrates. Also catalyzes the reverse reactions. The polypeptide is Pyrimidine/purine nucleoside phosphorylase (Acinetobacter baumannii (strain AB307-0294)).